An 81-amino-acid polypeptide reads, in one-letter code: MSHSVKIYDTCIGCTHCVRACPTDVLEMIPWDGCKAKQIASAPRTEDCVGCKRCESACPTDFLSVRVYLGPETTRSMALSY.

4Fe-4S ferredoxin-type domains are found at residues 2 to 31 and 39 to 68; these read SHSV…MIPW and IASA…VRVY. Residues Cys11, Cys14, Cys17, Cys21, Cys48, Cys51, Cys54, and Cys58 each coordinate [4Fe-4S] cluster.

In terms of assembly, the eukaryotic PSI reaction center is composed of at least 11 subunits. [4Fe-4S] cluster is required as a cofactor.

It localises to the plastid. It is found in the chloroplast thylakoid membrane. It catalyses the reaction reduced [plastocyanin] + hnu + oxidized [2Fe-2S]-[ferredoxin] = oxidized [plastocyanin] + reduced [2Fe-2S]-[ferredoxin]. Its function is as follows. Apoprotein for the two 4Fe-4S centers FA and FB of photosystem I (PSI); essential for photochemical activity. FB is the terminal electron acceptor of PSI, donating electrons to ferredoxin. The C-terminus interacts with PsaA/B/D and helps assemble the protein into the PSI complex. Required for binding of PsaD and PsaE to PSI. PSI is a plastocyanin-ferredoxin oxidoreductase, converting photonic excitation into a charge separation, which transfers an electron from the donor P700 chlorophyll pair to the spectroscopically characterized acceptors A0, A1, FX, FA and FB in turn. The protein is Photosystem I iron-sulfur center of Zea mays (Maize).